Here is a 162-residue protein sequence, read N- to C-terminus: SCF ubiquitin ligase complex protein SKP1b (162 aa).

Ser2 is modified (N-acetylserine). The interval Ile100–Asn162 is interaction with the F-box domain of F-box proteins. Pro143 carries the 4-hydroxyproline modification. A glycan (O-linked (GlcNAc...) hydroxyproline) is linked at Pro143.

It belongs to the SKP1 family. Multiprotein complex (SCF) with cullin and F-box-containing protein. Capable of undergoing aggregation. Post-translationally, O-linked glycan consists of linear Gal-Gal-Fuc-Gal-GlcNAc. In terms of processing, not glycosylated in prespore cells. FpaA and fpaB seem to be identically glycosylated. Glycosylation is required for nuclear enrichment. Post-translationally, hydroxylated by phyA.

It localises to the cytoplasm. The protein resides in the nucleus. The polypeptide is SCF ubiquitin ligase complex protein SKP1b (fpaB-1) (Dictyostelium discoideum (Social amoeba)).